A 210-amino-acid polypeptide reads, in one-letter code: ATP-dependent Clp protease proteolytic subunit (210 aa).

S106 serves as the catalytic Nucleophile. H131 is an active-site residue.

It belongs to the peptidase S14 family. In terms of assembly, fourteen ClpP subunits assemble into 2 heptameric rings which stack back to back to give a disk-like structure with a central cavity, resembling the structure of eukaryotic proteasomes.

The protein localises to the cytoplasm. The catalysed reaction is Hydrolysis of proteins to small peptides in the presence of ATP and magnesium. alpha-casein is the usual test substrate. In the absence of ATP, only oligopeptides shorter than five residues are hydrolyzed (such as succinyl-Leu-Tyr-|-NHMec, and Leu-Tyr-Leu-|-Tyr-Trp, in which cleavage of the -Tyr-|-Leu- and -Tyr-|-Trp bonds also occurs).. Cleaves peptides in various proteins in a process that requires ATP hydrolysis. Has a chymotrypsin-like activity. Plays a major role in the degradation of misfolded proteins. This is ATP-dependent Clp protease proteolytic subunit from Bartonella tribocorum (strain CIP 105476 / IBS 506).